The chain runs to 475 residues: Ribulose bisphosphate carboxylase large chain (475 aa).

The propeptide occupies 1 to 2 (MS). An N-acetylproline modification is found at proline 3. An N6,N6,N6-trimethyllysine modification is found at lysine 14. Asparagine 123 and threonine 173 together coordinate substrate. The active-site Proton acceptor is lysine 175. A substrate-binding site is contributed by lysine 177. Residues lysine 201, aspartate 203, and glutamate 204 each contribute to the Mg(2+) site. Lysine 201 is modified (N6-carboxylysine). Histidine 294 functions as the Proton acceptor in the catalytic mechanism. Arginine 295, histidine 327, and serine 379 together coordinate substrate.

It belongs to the RuBisCO large chain family. Type I subfamily. Heterohexadecamer of 8 large chains and 8 small chains; disulfide-linked. The disulfide link is formed within the large subunit homodimers. It depends on Mg(2+) as a cofactor. Post-translationally, the disulfide bond which can form in the large chain dimeric partners within the hexadecamer appears to be associated with oxidative stress and protein turnover.

It localises to the plastid. It is found in the chloroplast. The catalysed reaction is 2 (2R)-3-phosphoglycerate + 2 H(+) = D-ribulose 1,5-bisphosphate + CO2 + H2O. It carries out the reaction D-ribulose 1,5-bisphosphate + O2 = 2-phosphoglycolate + (2R)-3-phosphoglycerate + 2 H(+). In terms of biological role, ruBisCO catalyzes two reactions: the carboxylation of D-ribulose 1,5-bisphosphate, the primary event in carbon dioxide fixation, as well as the oxidative fragmentation of the pentose substrate in the photorespiration process. Both reactions occur simultaneously and in competition at the same active site. This chain is Ribulose bisphosphate carboxylase large chain, found in Alnus incana (White alder).